Reading from the N-terminus, the 586-residue chain is Succinate dehydrogenase flavoprotein subunit (586 aa).

Residues 10 to 15 (GGGLAG) and 33 to 48 (SIVPVKRSHSVCAQGG) contribute to the FAD site. H41 bears the Tele-8alpha-FAD histidine mark. Positions 236 and 250 each coordinate substrate. R285 (proton acceptor) is an active-site residue. H352 is a substrate binding site. Residue E376 participates in FAD binding. Residue R386 participates in substrate binding. 391-392 (SL) serves as a coordination point for FAD.

The protein belongs to the FAD-dependent oxidoreductase 2 family. FRD/SDH subfamily. As to quaternary structure, in B.subtilis succinate dehydrogenase forms part of an enzyme complex containing three subunits: a flavoprotein, an iron-sulfur protein and cytochrome b-558. Interacts with FloT. It depends on FAD as a cofactor.

The protein resides in the cell membrane. Its subcellular location is the membrane raft. It carries out the reaction a quinone + succinate = fumarate + a quinol. It participates in carbohydrate metabolism; tricarboxylic acid cycle; fumarate from succinate (bacterial route): step 1/1. The chain is Succinate dehydrogenase flavoprotein subunit (sdhA) from Bacillus subtilis (strain 168).